Here is a 644-residue protein sequence, read N- to C-terminus: MIRIRFGMDVLLVLLLATCLLSPTHGTPLEWDFAVTLRTKIQFMDSSWQTIATAAHEFDELSALTFDESEELIYFNDLKHRNGSIFSLKRDLIAANHVVEQTIARTGNESVAGLAYDPLTTNLFWSDTEQRKIFFASIHGSATPKVLVDLSAEGGRPDGVAVDVCRRKLYWTNSNVTHPTVERIDLDGSNRTVIVNSDIDMPRGIVVDQLSDRLFWIDDLKGVFFSVESSKLDGSDRQVVLKDKHHEPLNLAVTNDAIYWTDRTTRSVWSHPKVPVIRVTTTSKPEEEDSTDATDFKDPEPVAEDCPLVRVANLSEEARGIVARTGFYQRLQKDHHCASIVRKVKQRVDEQSRKFEVSSLLDQKMKVLENERCMNNGEYKAATDLCICPTGFKGSRCEIRECHNYCVHGTCQMSESAYPKCYCQPGFTGERCEVSVCAGLCLNGGHCRASKEENEAPTCECPAKFGGARCEQNSTEICSLFCRLLKHEPEMYVPFGCHSICEELAQGNSTNIAVPQYQHLEVCLTPTVWTSSVIIILVVGIVSSLLLVAVIVHGIRRLYKPKRPRIRKTFVVRKQARTNSAGDTPLTNRPLATEQCEITIENCCNMNICETPCFDPKLVEQTLSKSSCKEDKKILIHNMEDDLY.

The first 26 residues, 1–26 (MIRIRFGMDVLLVLLLATCLLSPTHG), serve as a signal peptide directing secretion. Topologically, residues 27–531 (TPLEWDFAVT…VCLTPTVWTS (505 aa)) are extracellular. 2 N-linked (GlcNAc...) asparagine glycosylation sites follow: asparagine 82 and asparagine 108. 3 LDL-receptor class B repeats span residues 121-166 (TNLF…DVCR), 167-211 (RKLY…DQLS), and 212-257 (DRLF…TNDA). 2 N-linked (GlcNAc...) asparagine glycosylation sites follow: asparagine 175 and asparagine 190. Asparagine 313 carries N-linked (GlcNAc...) asparagine glycosylation. EGF-like domains lie at 398–430 (EIRECHNYCVHGTCQMSESAYPKCYCQPGFTGE) and 433–471 (EVSVCAGLCLNGGHCRASKEENEAPTCECPAKFGGARCE). 5 disulfides stabilise this stretch: cysteine 402-cysteine 411, cysteine 406-cysteine 421, cysteine 437-cysteine 447, cysteine 441-cysteine 459, and cysteine 461-cysteine 470. Residues asparagine 473 and asparagine 508 are each glycosylated (N-linked (GlcNAc...) asparagine). A helical membrane pass occupies residues 532–552 (SVIIILVVGIVSSLLLVAVIV). Topologically, residues 553–644 (HGIRRLYKPK…LIHNMEDDLY (92 aa)) are cytoplasmic.

The protein belongs to the cueball family.

It localises to the cell membrane. Its function is as follows. Has a role in spermatogenesis and oogenesis. The polypeptide is Protein cueball (Drosophila yakuba (Fruit fly)).